The chain runs to 602 residues: Elongation factor 4 (602 aa).

The region spanning 7 to 189 (KKIRNFSIIA…SIVKNVPSPK (183 aa)) is the tr-type G domain. GTP contacts are provided by residues 19-24 (DHGKST) and 136-139 (NKID).

Belongs to the TRAFAC class translation factor GTPase superfamily. Classic translation factor GTPase family. LepA subfamily.

The protein localises to the cell membrane. It catalyses the reaction GTP + H2O = GDP + phosphate + H(+). Its function is as follows. Required for accurate and efficient protein synthesis under certain stress conditions. May act as a fidelity factor of the translation reaction, by catalyzing a one-codon backward translocation of tRNAs on improperly translocated ribosomes. Back-translocation proceeds from a post-translocation (POST) complex to a pre-translocation (PRE) complex, thus giving elongation factor G a second chance to translocate the tRNAs correctly. Binds to ribosomes in a GTP-dependent manner. The protein is Elongation factor 4 of Alkaliphilus oremlandii (strain OhILAs) (Clostridium oremlandii (strain OhILAs)).